A 276-amino-acid polypeptide reads, in one-letter code: Large ribosomal subunit protein uL2 (276 aa).

Disordered stretches follow at residues 35–55 (APLHKKGGRNNQGRLTVRHQG) and 222–276 (GSVM…RRKK). Residues 258 to 276 (KTRKKNKHSDKYIVRRRKK) show a composition bias toward basic residues.

This sequence belongs to the universal ribosomal protein uL2 family. Part of the 50S ribosomal subunit. Forms a bridge to the 30S subunit in the 70S ribosome.

Functionally, one of the primary rRNA binding proteins. Required for association of the 30S and 50S subunits to form the 70S ribosome, for tRNA binding and peptide bond formation. It has been suggested to have peptidyltransferase activity; this is somewhat controversial. Makes several contacts with the 16S rRNA in the 70S ribosome. This Shouchella clausii (strain KSM-K16) (Alkalihalobacillus clausii) protein is Large ribosomal subunit protein uL2.